We begin with the raw amino-acid sequence, 374 residues long: Chaperone protein DnaJ (374 aa).

Residues 4–68 (DYYDILGVSR…QMRGRYDQFG (65 aa)) enclose the J domain. The CR-type zinc-finger motif lies at 133 to 215 (GGEQQIRISH…CGGRGQNQVS (83 aa)). Zn(2+) contacts are provided by C146, C149, C163, C166, C189, C192, C203, and C206. CXXCXGXG motif repeat units lie at residues 146–153 (CKTCEGTG), 163–170 (CSTCQGSG), 189–196 (CPTCNGQG), and 203–210 (CDSCGGRG).

Belongs to the DnaJ family. As to quaternary structure, homodimer. Zn(2+) serves as cofactor.

Its subcellular location is the cytoplasm. Functionally, participates actively in the response to hyperosmotic and heat shock by preventing the aggregation of stress-denatured proteins and by disaggregating proteins, also in an autonomous, DnaK-independent fashion. Unfolded proteins bind initially to DnaJ; upon interaction with the DnaJ-bound protein, DnaK hydrolyzes its bound ATP, resulting in the formation of a stable complex. GrpE releases ADP from DnaK; ATP binding to DnaK triggers the release of the substrate protein, thus completing the reaction cycle. Several rounds of ATP-dependent interactions between DnaJ, DnaK and GrpE are required for fully efficient folding. Also involved, together with DnaK and GrpE, in the DNA replication of plasmids through activation of initiation proteins. The sequence is that of Chaperone protein DnaJ from Acaryochloris marina (strain MBIC 11017).